The primary structure comprises 367 residues: Diphthine methyltransferase homolog (367 aa).

4 WD repeats span residues 84–124, 132–173, 180–220, and 234–274; these read NFNS…KKLE, SLSN…SKVT, AHDY…NHND, and RCDM…QPII.

It belongs to the DPH7 family.

The catalysed reaction is diphthine methyl ester-[translation elongation factor 2] + H2O = diphthine-[translation elongation factor 2] + methanol + H(+). It functions in the pathway protein modification; peptidyl-diphthamide biosynthesis. In terms of biological role, catalyzes the demethylation of diphthine methyl ester to form diphthine, an intermediate diphthamide biosynthesis, a post-translational modification of histidine which occurs in translation elongation factor 2 (efbA). The sequence is that of Diphthine methyltransferase homolog (wdr85) from Dictyostelium discoideum (Social amoeba).